A 426-amino-acid chain; its full sequence is Serine--tRNA ligase (426 aa).

231–233 (TSE) contacts L-serine. 262–264 (RSE) lines the ATP pocket. Position 285 (Glu285) interacts with L-serine. Residue 349–352 (EISS) participates in ATP binding. Residue Ser385 coordinates L-serine.

This sequence belongs to the class-II aminoacyl-tRNA synthetase family. Type-1 seryl-tRNA synthetase subfamily. Homodimer. The tRNA molecule binds across the dimer.

The protein resides in the cytoplasm. It catalyses the reaction tRNA(Ser) + L-serine + ATP = L-seryl-tRNA(Ser) + AMP + diphosphate + H(+). The catalysed reaction is tRNA(Sec) + L-serine + ATP = L-seryl-tRNA(Sec) + AMP + diphosphate + H(+). It participates in aminoacyl-tRNA biosynthesis; selenocysteinyl-tRNA(Sec) biosynthesis; L-seryl-tRNA(Sec) from L-serine and tRNA(Sec): step 1/1. Its function is as follows. Catalyzes the attachment of serine to tRNA(Ser). Is also able to aminoacylate tRNA(Sec) with serine, to form the misacylated tRNA L-seryl-tRNA(Sec), which will be further converted into selenocysteinyl-tRNA(Sec). The chain is Serine--tRNA ligase from Legionella pneumophila subsp. pneumophila (strain Philadelphia 1 / ATCC 33152 / DSM 7513).